The following is a 626-amino-acid chain: Elongation factor 4 (626 aa).

Residues Ser-14 to His-195 enclose the tr-type G domain. GTP is bound by residues Asp-26 to Thr-31 and Asn-142 to Asp-145. The disordered stretch occupies residues Leu-603–Gly-626. The span at Ser-609–Gly-626 shows a compositional bias: basic and acidic residues.

Belongs to the TRAFAC class translation factor GTPase superfamily. Classic translation factor GTPase family. LepA subfamily.

The protein resides in the cell membrane. The catalysed reaction is GTP + H2O = GDP + phosphate + H(+). In terms of biological role, required for accurate and efficient protein synthesis under certain stress conditions. May act as a fidelity factor of the translation reaction, by catalyzing a one-codon backward translocation of tRNAs on improperly translocated ribosomes. Back-translocation proceeds from a post-translocation (POST) complex to a pre-translocation (PRE) complex, thus giving elongation factor G a second chance to translocate the tRNAs correctly. Binds to ribosomes in a GTP-dependent manner. The protein is Elongation factor 4 of Bifidobacterium longum subsp. infantis (strain ATCC 15697 / DSM 20088 / JCM 1222 / NCTC 11817 / S12).